The following is a 151-amino-acid chain: MFRGATAVNLDSKGRVAIPTRYRAEILEKNQGQMVCTVDIRQSCLLLYPLDEWEKIEQKLLALSNFDPTQRRLQRVMLGHATECEMDAQGRILLSGPLRQHAKLEKGLMLVGQLNKFEIWSDVEWHTQIAEDIEIGSSTDFAADALNDFSL.

SpoVT-AbrB domains follow at residues 5 to 52 (ATAV…PLDE) and 81 to 124 (ATEC…SDVE).

It belongs to the MraZ family. As to quaternary structure, forms oligomers.

The protein localises to the cytoplasm. It localises to the nucleoid. The protein is Transcriptional regulator MraZ of Haemophilus influenzae (strain 86-028NP).